The following is a 525-amino-acid chain: uncharacterized protein (525 aa).

6 consecutive transmembrane segments (helical) span residues 7–29 (FLAT…LGQI), 34–51 (LRFG…VGAL), 64–82 (GLGV…GSTF), 92–114 (LMLA…GRLF), 121–143 (VAGL…ATHG), and 148–170 (LVGY…AIIA). 2 consecutive RCK C-terminal domains span residues 178 to 257 (KDNT…LGHV) and 259 to 341 (ERTL…LFGD). 5 helical membrane-spanning segments follow: residues 351–370 (ALSL…LMVA), 374–396 (GLQF…GSIH), 416–438 (LGLM…SQAV), 443–465 (LAVI…AAAW), and 502–524 (SAYG…VIVL).

Belongs to the AAE transporter (TC 2.A.81) family.

It localises to the cell membrane. This is an uncharacterized protein from Cutibacterium acnes (strain DSM 16379 / KPA171202) (Propionibacterium acnes).